The chain runs to 299 residues: Acetylglutamate kinase (299 aa).

Substrate-binding positions include 72-73 (GG), R94, and N196.

It belongs to the acetylglutamate kinase family. ArgB subfamily.

The protein resides in the cytoplasm. The enzyme catalyses N-acetyl-L-glutamate + ATP = N-acetyl-L-glutamyl 5-phosphate + ADP. It participates in amino-acid biosynthesis; L-arginine biosynthesis; N(2)-acetyl-L-ornithine from L-glutamate: step 2/4. In terms of biological role, catalyzes the ATP-dependent phosphorylation of N-acetyl-L-glutamate. This is Acetylglutamate kinase from Burkholderia thailandensis (strain ATCC 700388 / DSM 13276 / CCUG 48851 / CIP 106301 / E264).